The primary structure comprises 202 residues: FMN-dependent NADH:quinone oxidoreductase (202 aa).

FMN is bound by residues Ser9, 15–17, and 94–97; these read SAS and MYNL.

This sequence belongs to the azoreductase type 1 family. Homodimer. It depends on FMN as a cofactor.

The catalysed reaction is 2 a quinone + NADH + H(+) = 2 a 1,4-benzosemiquinone + NAD(+). It carries out the reaction N,N-dimethyl-1,4-phenylenediamine + anthranilate + 2 NAD(+) = 2-(4-dimethylaminophenyl)diazenylbenzoate + 2 NADH + 2 H(+). Quinone reductase that provides resistance to thiol-specific stress caused by electrophilic quinones. In terms of biological role, also exhibits azoreductase activity. Catalyzes the reductive cleavage of the azo bond in aromatic azo compounds to the corresponding amines. This is FMN-dependent NADH:quinone oxidoreductase from Gluconobacter oxydans (strain 621H) (Gluconobacter suboxydans).